The primary structure comprises 181 residues: CDP-diacylglycerol--glycerol-3-phosphate 3-phosphatidyltransferase (181 aa).

The next 4 membrane-spanning stretches (helical) occupy residues 8–28 (PNYL…LFYI), 35–55 (KLGA…GYIA), 64–84 (FGKM…TIML), and 148–168 (IIYL…LTII).

This sequence belongs to the CDP-alcohol phosphatidyltransferase class-I family.

It is found in the cell membrane. It catalyses the reaction a CDP-1,2-diacyl-sn-glycerol + sn-glycerol 3-phosphate = a 1,2-diacyl-sn-glycero-3-phospho-(1'-sn-glycero-3'-phosphate) + CMP + H(+). The protein operates within phospholipid metabolism; phosphatidylglycerol biosynthesis; phosphatidylglycerol from CDP-diacylglycerol: step 1/2. Functionally, this protein catalyzes the committed step to the synthesis of the acidic phospholipids. This Rickettsia prowazekii (strain Madrid E) protein is CDP-diacylglycerol--glycerol-3-phosphate 3-phosphatidyltransferase (pgsA).